We begin with the raw amino-acid sequence, 367 residues long: 3-dehydroquinate synthase (367 aa).

NAD(+)-binding positions include 69 to 74 (DGEAFK), 103 to 107 (GVIGD), 127 to 128 (TT), lysine 140, and lysine 149. Glutamate 182, histidine 245, and histidine 262 together coordinate Zn(2+).

Belongs to the sugar phosphate cyclases superfamily. Dehydroquinate synthase family. The cofactor is Co(2+). Requires Zn(2+) as cofactor. NAD(+) is required as a cofactor.

It is found in the cytoplasm. The catalysed reaction is 7-phospho-2-dehydro-3-deoxy-D-arabino-heptonate = 3-dehydroquinate + phosphate. It participates in metabolic intermediate biosynthesis; chorismate biosynthesis; chorismate from D-erythrose 4-phosphate and phosphoenolpyruvate: step 2/7. Functionally, catalyzes the conversion of 3-deoxy-D-arabino-heptulosonate 7-phosphate (DAHP) to dehydroquinate (DHQ). This is 3-dehydroquinate synthase from Pseudomonas savastanoi pv. phaseolicola (strain 1448A / Race 6) (Pseudomonas syringae pv. phaseolicola (strain 1448A / Race 6)).